Reading from the N-terminus, the 242-residue chain is Peroxisomal membrane protein 11-3 (242 aa).

The interval 1-22 (MAAAAAAAGSSDSRKPAAHPPP) is disordered. Residues 1 to 102 (MAAAAAAAGS…LRAHPHPPPA (102 aa)) lie on the Cytoplasmic side of the membrane. The helical transmembrane segment at 103-123 (VALLAYGGEGVYYFLEQFVWL) threads the bilayer. The Lumenal portion of the chain corresponds to 124–214 (AKAGLLPAHL…MALGDVTDGK (91 aa)). The helical transmembrane segment at 215-235 (GLLGSSTLMASAGLLSALISA) threads the bilayer. The Cytoplasmic segment spans residues 236 to 242 (HKNWNSC).

It belongs to the peroxin-11 family. Expressed in seedlings, roots, leaf sheaths, spikelets and endosperm.

It localises to the peroxisome membrane. Involved in peroxisomal proliferation. This chain is Peroxisomal membrane protein 11-3 (PEX11-3), found in Oryza sativa subsp. japonica (Rice).